An 824-amino-acid polypeptide reads, in one-letter code: Ent-copalyl diphosphate synthase AN1, chloroplastic (824 aa).

A chloroplast-targeting transit peptide spans 1–63 (MPYPHPYPWQ…SSAKVFQTSR (63 aa)). The tract at residues 1-87 (MPYPHPYPWQ…QDLEDEHQAE (87 aa)) is disordered. The span at 44–63 (ATTTQQPDNVSSAKVFQTSR) shows a compositional bias: polar residues. Residue Lys-247 coordinates substrate. Mg(2+) is bound by residues Asp-379 and Asp-381. The DXDD motif motif lies at 379–382 (DVDD). Residue Lys-465 participates in substrate binding.

The protein belongs to the terpene synthase family. Tpsc subfamily. Mg(2+) serves as cofactor.

It is found in the plastid. Its subcellular location is the chloroplast. The catalysed reaction is (2E,6E,10E)-geranylgeranyl diphosphate = ent-copalyl diphosphate. It participates in plant hormone biosynthesis; gibberellin biosynthesis. In terms of biological role, involved in giberellin biosynthesis. Catalyzes the conversion of geranylgeranyl diphosphate to the gibberellin precursor ent-copalyl diphosphate. The polypeptide is Ent-copalyl diphosphate synthase AN1, chloroplastic (Zea mays (Maize)).